We begin with the raw amino-acid sequence, 358 residues long: Phospho-N-acetylmuramoyl-pentapeptide-transferase (358 aa).

10 helical membrane passes run 28-48, 70-90, 92-112, 133-153, 165-185, 196-216, 233-253, 260-280, 285-305, and 335-355; these read AALMTALLISIILGPRFITWL, TPTMGGLLMLFSLSVSLLLWA, LTNIYIWQAFFVFAGFGAVGF, MGGQLAVACVAMLLLFVNPDY, VTFDLGWFYLPFGVFVMVAAS, GLAIGPSIVACIVFSIFIYIT, VGEVTIFCAALVGAGLGFLWF, VFMGDVGSLSIGGVLGYLALL, LVLAVVGGLFVAETLSVIVQV, and KIIIRFWITSILLGLMALSVL.

This sequence belongs to the glycosyltransferase 4 family. MraY subfamily. Mg(2+) is required as a cofactor.

The protein localises to the cell inner membrane. It carries out the reaction UDP-N-acetyl-alpha-D-muramoyl-L-alanyl-gamma-D-glutamyl-meso-2,6-diaminopimeloyl-D-alanyl-D-alanine + di-trans,octa-cis-undecaprenyl phosphate = di-trans,octa-cis-undecaprenyl diphospho-N-acetyl-alpha-D-muramoyl-L-alanyl-D-glutamyl-meso-2,6-diaminopimeloyl-D-alanyl-D-alanine + UMP. The protein operates within cell wall biogenesis; peptidoglycan biosynthesis. Its function is as follows. Catalyzes the initial step of the lipid cycle reactions in the biosynthesis of the cell wall peptidoglycan: transfers peptidoglycan precursor phospho-MurNAc-pentapeptide from UDP-MurNAc-pentapeptide onto the lipid carrier undecaprenyl phosphate, yielding undecaprenyl-pyrophosphoryl-MurNAc-pentapeptide, known as lipid I. The sequence is that of Phospho-N-acetylmuramoyl-pentapeptide-transferase from Desulfovibrio desulfuricans (strain ATCC 27774 / DSM 6949 / MB).